A 141-amino-acid polypeptide reads, in one-letter code: Lutropin subunit beta (141 aa).

Positions 1-20 (MEMFQGLLLWLLLNTGGAWA) are cleaved as a signal peptide. 6 disulfides stabilise this stretch: cysteine 29–cysteine 77, cysteine 43–cysteine 92, cysteine 46–cysteine 130, cysteine 54–cysteine 108, cysteine 58–cysteine 110, and cysteine 113–cysteine 120. N-linked (GlcNAc...) asparagine glycosylation occurs at asparagine 33.

The protein belongs to the glycoprotein hormones subunit beta family. Heterodimer of a common alpha chain and a unique beta chain which confers biological specificity to thyrotropin, lutropin, follitropin and gonadotropin.

The protein localises to the secreted. Functionally, promotes spermatogenesis and ovulation by stimulating the testes and ovaries to synthesize steroids. The polypeptide is Lutropin subunit beta (LHB) (Ailuropoda melanoleuca (Giant panda)).